A 211-amino-acid chain; its full sequence is tRNA (guanine-N(7)-)-methyltransferase (211 aa).

4 residues coordinate S-adenosyl-L-methionine: D40, E65, N92, and D118. D118 is an active-site residue. 2 residues coordinate substrate: K122 and D154.

This sequence belongs to the class I-like SAM-binding methyltransferase superfamily. TrmB family.

It catalyses the reaction guanosine(46) in tRNA + S-adenosyl-L-methionine = N(7)-methylguanosine(46) in tRNA + S-adenosyl-L-homocysteine. The protein operates within tRNA modification; N(7)-methylguanine-tRNA biosynthesis. In terms of biological role, catalyzes the formation of N(7)-methylguanine at position 46 (m7G46) in tRNA. This Microcystis aeruginosa (strain NIES-843 / IAM M-2473) protein is tRNA (guanine-N(7)-)-methyltransferase.